Reading from the N-terminus, the 75-residue chain is DNA-directed RNA polymerase subunit omega (75 aa).

Belongs to the RNA polymerase subunit omega family. In terms of assembly, the RNAP catalytic core consists of 2 alpha, 1 beta, 1 beta' and 1 omega subunit. When a sigma factor is associated with the core the holoenzyme is formed, which can initiate transcription.

It catalyses the reaction RNA(n) + a ribonucleoside 5'-triphosphate = RNA(n+1) + diphosphate. In terms of biological role, promotes RNA polymerase assembly. Latches the N- and C-terminal regions of the beta' subunit thereby facilitating its interaction with the beta and alpha subunits. The protein is DNA-directed RNA polymerase subunit omega of Thermosipho melanesiensis (strain DSM 12029 / CIP 104789 / BI429).